A 271-amino-acid polypeptide reads, in one-letter code: Pyrroline-5-carboxylate reductase (271 aa).

Belongs to the pyrroline-5-carboxylate reductase family.

The protein localises to the cytoplasm. It catalyses the reaction L-proline + NADP(+) = (S)-1-pyrroline-5-carboxylate + NADPH + 2 H(+). It carries out the reaction L-proline + NAD(+) = (S)-1-pyrroline-5-carboxylate + NADH + 2 H(+). Its pathway is amino-acid biosynthesis; L-proline biosynthesis; L-proline from L-glutamate 5-semialdehyde: step 1/1. Catalyzes the reduction of 1-pyrroline-5-carboxylate (PCA) to L-proline. This chain is Pyrroline-5-carboxylate reductase, found in Staphylococcus saprophyticus subsp. saprophyticus (strain ATCC 15305 / DSM 20229 / NCIMB 8711 / NCTC 7292 / S-41).